Reading from the N-terminus, the 254-residue chain is MILNKALMLGALALTTVMSPCGGEDIVADHVASYGVNLYQSYGPSGQYTHEFDGDEQFYVDLGRKETVWCLPVLRQFRFDPQFALTNIAVLKHNLNSLIKRSNSTAATNEVPEVTVFSKSPVTLGQPNILICLVDNIFPPVVNITWLSNGHSVTEGVSETSFLSKSDHSFFKISYLTLLPSAEESYDCKVEHWGLDKPLLKHWEPEIPAPMSELTETVVCALGLSVGLVGIVVGTVFIIRGLRSVGASRHQGPL.

The N-terminal stretch at 1–23 (MILNKALMLGALALTTVMSPCGG) is a signal peptide. The tract at residues 24 to 119 (EDIVADHVAS…EVPEVTVFSK (96 aa)) is alpha-1. Residues 24–216 (EDIVADHVAS…IPAPMSELTE (193 aa)) lie on the Extracellular side of the membrane. 2 N-linked (GlcNAc...) asparagine glycosylation sites follow: N103 and N143. Residues 112-204 (PEVTVFSKSP…LDKPLLKHWE (93 aa)) enclose the Ig-like C1-type domain. The interval 120–203 (SPVTLGQPNI…GLDKPLLKHW (84 aa)) is alpha-2. C132 and C188 are joined by a disulfide. Residues 204–216 (EPEIPAPMSELTE) form a connecting peptide region. A helical membrane pass occupies residues 217–239 (TVVCALGLSVGLVGIVVGTVFII). At 240–254 (RGLRSVGASRHQGPL) the chain is on the cytoplasmic side.

The protein belongs to the MHC class II family. In terms of assembly, heterodimer of an alpha and a beta subunit; also referred as MHC class II molecule. In the endoplasmic reticulum (ER) it forms a heterononamer; 3 MHC class II molecules bind to a CD74 homotrimer (also known as invariant chain or HLA class II histocompatibility antigen gamma chain). In the endosomal/lysosomal system; CD74 undergoes sequential degradation by various proteases; leaving a small fragment termed CLIP on each MHC class II molecule. MHC class II molecule interacts with HLA_DM, and HLA_DO in B-cells, in order to release CLIP and facilitate the binding of antigenic peptides.

It is found in the cell membrane. The protein resides in the endoplasmic reticulum membrane. The protein localises to the golgi apparatus. Its subcellular location is the trans-Golgi network membrane. It localises to the endosome membrane. It is found in the lysosome membrane. In terms of biological role, binds peptides derived from antigens that access the endocytic route of antigen presenting cells (APC) and presents them on the cell surface for recognition by the CD4 T-cells. The peptide binding cleft accommodates peptides of 10-30 residues. The peptides presented by MHC class II molecules are generated mostly by degradation of proteins that access the endocytic route, where they are processed by lysosomal proteases and other hydrolases. Exogenous antigens that have been endocytosed by the APC are thus readily available for presentation via MHC II molecules, and for this reason this antigen presentation pathway is usually referred to as exogenous. As membrane proteins on their way to degradation in lysosomes as part of their normal turn-over are also contained in the endosomal/lysosomal compartments, exogenous antigens must compete with those derived from endogenous components. Autophagy is also a source of endogenous peptides, autophagosomes constitutively fuse with MHC class II loading compartments. In addition to APCs, other cells of the gastrointestinal tract, such as epithelial cells, express MHC class II molecules and CD74 and act as APCs, which is an unusual trait of the GI tract. To produce a MHC class II molecule that presents an antigen, three MHC class II molecules (heterodimers of an alpha and a beta chain) associate with a CD74 trimer in the ER to form a heterononamer. Soon after the entry of this complex into the endosomal/lysosomal system where antigen processing occurs, CD74 undergoes a sequential degradation by various proteases, including CTSS and CTSL, leaving a small fragment termed CLIP (class-II-associated invariant chain peptide). The removal of CLIP is facilitated by HLA-DM via direct binding to the alpha-beta-CLIP complex so that CLIP is released. HLA-DM stabilizes MHC class II molecules until primary high affinity antigenic peptides are bound. The MHC II molecule bound to a peptide is then transported to the cell membrane surface. In B-cells, the interaction between HLA-DM and MHC class II molecules is regulated by HLA-DO. Primary dendritic cells (DCs) also to express HLA-DO. Lysosomal microenvironment has been implicated in the regulation of antigen loading into MHC II molecules, increased acidification produces increased proteolysis and efficient peptide loading. This chain is HLA class II histocompatibility antigen, DQ alpha 1 chain (HLA-DQA1), found in Homo sapiens (Human).